The sequence spans 367 residues: Membrane-bound lytic murein transglycosylase C (367 aa).

The first 19 residues, 1-19 (MRKYAKYLPFCLVVPFLAA), serve as a signal peptide directing secretion. Cys20 carries N-palmitoyl cysteine lipidation. Residue Cys20 is the site of S-diacylglycerol cysteine attachment.

The protein belongs to the transglycosylase Slt family.

It is found in the cell outer membrane. The enzyme catalyses Exolytic cleavage of the (1-&gt;4)-beta-glycosidic linkage between N-acetylmuramic acid (MurNAc) and N-acetylglucosamine (GlcNAc) residues in peptidoglycan, from either the reducing or the non-reducing ends of the peptidoglycan chains, with concomitant formation of a 1,6-anhydrobond in the MurNAc residue.. Functionally, murein-degrading enzyme. May play a role in recycling of muropeptides during cell elongation and/or cell division. This chain is Membrane-bound lytic murein transglycosylase C, found in Haemophilus ducreyi (strain 35000HP / ATCC 700724).